Here is a 1955-residue protein sequence, read N- to C-terminus: Callose synthase 3 (1955 aa).

Over 1–488 (MSATRGGPDQ…FWHVFRSFDR (488 aa)) the chain is Cytoplasmic. A helical membrane pass occupies residues 489-509 (MWSFYILCLQAMIIMAWDGGQ). Residues 510–521 (PSSVFGADVFKK) are Extracellular-facing. Residues 522–542 (VLSVFITAAIMKLGQAVLDVI) traverse the membrane as a helical segment. At 543 to 558 (LNFKAHQSMTLHVKLR) the chain is on the cytoplasmic side. The chain crosses the membrane as a helical span at residues 559-579 (YILKVFSAAAWVIILPVTYAY). The Extracellular portion of the chain corresponds to 580 to 604 (SWKDPPAFARTIKSWFGSAMHSPSL). A helical membrane pass occupies residues 605–625 (FIIAVVSYLSPNMLAGVMFLF). Residues 626 to 660 (PLLRRFLERSNYRIVMLMMWWSQPRLYVGRGMHES) lie on the Cytoplasmic side of the membrane. Residues 661–681 (AFSLFKYTMFWVLLIATKLAF) form a helical membrane-spanning segment. The Extracellular portion of the chain corresponds to 682 to 717 (SYYIEIRPLVAPTQAIMKARVTNFQWHEFFPRAKNN). A helical transmembrane segment spans residues 718 to 738 (IGVVIALWAPIILVYFMDSQI). The Cytoplasmic segment spans residues 739 to 1517 (WYAIFSTLFG…FDFFRMMSCY (779 aa)). The helical transmembrane segment at 1518–1538 (FTTVGFYFSTLITVLTVYIFL) threads the bilayer. Topologically, residues 1539 to 1566 (YGRLYLVLSGLEQGLSTQKGIRDNTPLQ) are extracellular. A helical transmembrane segment spans residues 1567-1587 (IALASQSFVQIGFLMALPMLM). At 1588–1597 (EIGLERGFRT) the chain is on the cytoplasmic side. A helical membrane pass occupies residues 1598-1618 (ALSEFVLMQLQLAPVFFTFSL). Over 1619-1661 (GTKTHYYGRTLLHGGAKYRSTGRGFVVFHAKFADNYRLYSRSH) the chain is Extracellular. Residues 1662–1682 (FVKGLEMMLLLVVYQIFGSAY) traverse the membrane as a helical segment. Over 1683–1688 (RGVLAY) the chain is Cytoplasmic. The chain crosses the membrane as a helical span at residues 1689–1709 (LLITISMWFMVGTWLFAPFLF). The Extracellular portion of the chain corresponds to 1710–1761 (NPSGFEWQKIVDDWTDWNKWINNIGGIGVPAEKSWESWWEEEQEHLRYSGKR). A helical transmembrane segment spans residues 1762 to 1782 (GIVVEILLALRFFIYQYGLVY). Residues 1783-1792 (HLTITEKTKN) are Cytoplasmic-facing. A helical membrane pass occupies residues 1793-1813 (FLVYGVSWLVIFLILFVMKTV). Over 1814–1833 (SVGRRRFSASFQLMFRLIKG) the chain is Extracellular. The chain crosses the membrane as a helical span at residues 1834-1854 (LIFMTFIAIIVILITLAHMTI). At 1855-1856 (QD) the chain is on the cytoplasmic side. Residues 1857–1877 (IIVCILAFMPTGWGMLLIAQA) traverse the membrane as a helical segment. Topologically, residues 1878 to 1899 (CKPVVHRAGFWGSVRTLARGYE) are extracellular. The helical transmembrane segment at 1900-1920 (IVMGLLLFTPVAFLAWFPFVS) threads the bilayer. At 1921 to 1955 (EFQTRMLFNQAFSRGLQISRILGGHRKDRSSRNKE) the chain is on the cytoplasmic side.

This sequence belongs to the glycosyltransferase 48 family.

It is found in the cell membrane. It catalyses the reaction [(1-&gt;3)-beta-D-glucosyl](n) + UDP-alpha-D-glucose = [(1-&gt;3)-beta-D-glucosyl](n+1) + UDP + H(+). Its function is as follows. Involved in callose synthesis at the forming cell plate during cytokinesis. During plant growth and development, callose is found as a transitory component of the cell plate in dividing cells, is a major component of pollen mother cell walls and pollen tubes, and is found as a structural component of plasmodesmatal canals. The polypeptide is Callose synthase 3 (CALS3) (Arabidopsis thaliana (Mouse-ear cress)).